Here is a 306-residue protein sequence, read N- to C-terminus: MPNPLYRQHIISISDLSREQLECLLQTALKLKAHPRGDLLEGKLIGSCFFEPSTRTRLSFETAVQRLGGKVIGFSDGANTSAKKGETLADTARIISGYTDAIVQRHPKDGAARVAAEFSRVPVINAGDGTNQHPSQTLLDLVTIYETQGRLDKLKIAMAGDLKYGRTVHSLCQALKRWGCEFAFVSPPSLAMPDYITEELEEADCRYRALGSLEEAAEWADILYMTRVQRERFDEQEFAKIQGKFNLEASMLARAKPNLRVLHPLPRTDEIHPDVDAAPHAYYFEQATNGVYARMAILSLVLNEEV.

Carbamoyl phosphate is bound by residues arginine 55 and threonine 56. Lysine 84 is an L-aspartate binding site. Carbamoyl phosphate-binding residues include arginine 105, histidine 133, and glutamine 136. Arginine 166 and arginine 227 together coordinate L-aspartate. The carbamoyl phosphate site is built by leucine 265 and proline 266.

It belongs to the aspartate/ornithine carbamoyltransferase superfamily. ATCase family. In terms of assembly, heterododecamer (2C3:3R2) of six catalytic PyrB chains organized as two trimers (C3), and six regulatory PyrI chains organized as three dimers (R2).

It carries out the reaction carbamoyl phosphate + L-aspartate = N-carbamoyl-L-aspartate + phosphate + H(+). Its pathway is pyrimidine metabolism; UMP biosynthesis via de novo pathway; (S)-dihydroorotate from bicarbonate: step 2/3. Its function is as follows. Catalyzes the condensation of carbamoyl phosphate and aspartate to form carbamoyl aspartate and inorganic phosphate, the committed step in the de novo pyrimidine nucleotide biosynthesis pathway. This Neisseria gonorrhoeae (strain NCCP11945) protein is Aspartate carbamoyltransferase catalytic subunit.